The following is a 386-amino-acid chain: Flap endonuclease 1 (386 aa).

The segment at 1–104 (MGILGLSKLI…GELAKRAERR (104 aa)) is N-domain. A Mg(2+)-binding site is contributed by D34. DNA-binding residues include R47 and R70. Positions 86, 158, 160, 179, and 181 each coordinate Mg(2+). The interval 122–253 (EIEKFNRRLV…KRAIELINNY (132 aa)) is I-domain. Position 158 (E158) interacts with DNA. Residues G231 and D233 each contribute to the DNA site. D233 is a Mg(2+) binding site. The interaction with PCNA stretch occupies residues 336 to 344 (TQVRLDSFF). A disordered region spans residues 354–386 (VNAAKRKAEEAKKSANNKKAKTSGGAARGRRPK).

The protein belongs to the XPG/RAD2 endonuclease family. FEN1 subfamily. Interacts with PCNA. Three molecules of FEN1 bind to one PCNA trimer with each molecule binding to one PCNA monomer. PCNA stimulates the nuclease activity without altering cleavage specificity. The cofactor is Mg(2+). Post-translationally, phosphorylated. Phosphorylation upon DNA damage induces relocalization to the nuclear plasma.

Its subcellular location is the nucleus. It localises to the nucleolus. The protein resides in the nucleoplasm. The protein localises to the mitochondrion. Structure-specific nuclease with 5'-flap endonuclease and 5'-3' exonuclease activities involved in DNA replication and repair. During DNA replication, cleaves the 5'-overhanging flap structure that is generated by displacement synthesis when DNA polymerase encounters the 5'-end of a downstream Okazaki fragment. It enters the flap from the 5'-end and then tracks to cleave the flap base, leaving a nick for ligation. Also involved in the long patch base excision repair (LP-BER) pathway, by cleaving within the apurinic/apyrimidinic (AP) site-terminated flap. Acts as a genome stabilization factor that prevents flaps from equilibrating into structures that lead to duplications and deletions. Also possesses 5'-3' exonuclease activity on nicked or gapped double-stranded DNA, and exhibits RNase H activity. Also involved in replication and repair of rDNA and in repairing mitochondrial DNA. The sequence is that of Flap endonuclease 1 from Drosophila pseudoobscura pseudoobscura (Fruit fly).